Here is a 758-residue protein sequence, read N- to C-terminus: Spastin (758 aa).

The tract at residues 1 to 103 (MVRTKNQSSS…SPRSGHHHSY (103 aa)) is disordered. Topologically, residues 1–121 (MVRTKNQSSS…KQNLYVVSFP (121 aa)) are cytoplasmic. The tract at residues 1-210 (MVRTKNQSSS…RPIQPLEMAA (210 aa)) is required for localization to punctate cytoplasmic foci. Low complexity-rich tracts occupy residues 8–28 (SSSS…SSGA), 43–58 (RSSS…AGGS), 66–76 (SSNRRSPGSSP), and 85–95 (TDDLTPTTCSP). Positions 122-142 (IIFLFNVLRSLIYQLFCIFRY) form an intramembrane region, helical. The Cytoplasmic portion of the chain corresponds to 143 to 758 (LYGASTKVIY…WSQDYGDITI (616 aa)). Composition is skewed to polar residues over residues 169 to 180 (SKEQQQSLNHPS) and 189 to 198 (QEQQLSNQPQ). The tract at residues 169-202 (SKEQQQSLNHPSELNREGDGQEQQLSNQPQRFRP) is disordered. Residues 208–758 (MAANRPGGGY…WSQDYGDITI (551 aa)) form a sufficient for interaction with microtubules and microtubule severing region. Residues 233-308 (HRRAFEYISK…SMARDRLHFL (76 aa)) form the MIT domain. A disordered region spans residues 353–454 (RVRSSGYGPK…GPSGSGASTP (102 aa)). Polar residues-rich tracts occupy residues 390–406 (NKSQ…TSVG) and 425–454 (QFSS…ASTP). Residues 443–455 (NNGPSGSGASTPV) form a required for interaction with microtubules region. 523–530 (GPPGNGKT) serves as a coordination point for ATP.

This sequence belongs to the AAA ATPase family. Spastin subfamily. As to quaternary structure, homohexamer. The homohexamer is stabilized by ATP-binding. The homohexamer may adopt a ring conformation through which microtubules pass prior to being severed. Interacts with microtubules. Interacts with atl; may be involved in microtubule dynamics.

It is found in the membrane. The protein resides in the cytoplasm. The protein localises to the cytoskeleton. Its subcellular location is the microtubule organizing center. It localises to the centrosome. It is found in the chromosome. The protein resides in the lipid droplet. The enzyme catalyses n ATP + n H2O + a microtubule = n ADP + n phosphate + (n+1) alpha/beta tubulin heterodimers.. Its function is as follows. ATP-dependent microtubule severing protein. Stimulates microtubule minus-end depolymerization and poleward microtubule flux in the mitotic spindle. Regulates microtubule stability in the neuromuscular junction synapse. Involved in lipid metabolism by regulating the size and distribution of lipid droplets. Involved in axon regeneration by regulating microtubule severing. The protein is Spastin of Drosophila sechellia (Fruit fly).